The chain runs to 479 residues: UDP-N-acetylmuramate--L-alanine ligase (479 aa).

Gly-124 to Thr-130 contributes to the ATP binding site.

It belongs to the MurCDEF family.

Its subcellular location is the cytoplasm. It carries out the reaction UDP-N-acetyl-alpha-D-muramate + L-alanine + ATP = UDP-N-acetyl-alpha-D-muramoyl-L-alanine + ADP + phosphate + H(+). It functions in the pathway cell wall biogenesis; peptidoglycan biosynthesis. Cell wall formation. This is UDP-N-acetylmuramate--L-alanine ligase from Synechococcus sp. (strain RCC307).